The chain runs to 167 residues: Novel acetylcholine receptor chaperone (167 aa).

At 1-5 (MASPR) the chain is on the cytoplasmic side. A helical membrane pass occupies residues 6-26 (TITIMALSVALGLFFVFMGTI). Over 27 to 61 (KLTPRLSKDAYSEMKRAYKSYVRALPLLKKMGINS) the chain is Lumenal. An interaction with NGFR region spans residues 43–54 (AYKSYVRALPLL). The chain crosses the membrane as a helical span at residues 62 to 82 (ILLRKSIGALEVACGIVMTLV). Residues 83-88 (PGRPKD) lie on the Cytoplasmic side of the membrane. Residues 89–109 (VANFFLLLLVLAVLFFHQLVG) form a helical membrane-spanning segment. At 110–114 (DPLKR) the chain is on the lumenal side. The helical transmembrane segment at 115-132 (YAHALVFGILLTCRLLIA) threads the bilayer. Residues 133 to 167 (RKPEDRSSEKKALPESAEEQPSLYEKAPQGKVKVS) lie on the Cytoplasmic side of the membrane. Positions 135–145 (PEDRSSEKKAL) are enriched in basic and acidic residues. The disordered stretch occupies residues 135 to 167 (PEDRSSEKKALPESAEEQPSLYEKAPQGKVKVS).

It belongs to the DoxX family. May interact with NGFR. Interacts with RPN1, RPN2 and CANX. Brain (at protein level). Expressed in the spinal cord dorsal horn (at protein level).

The protein resides in the peroxisome membrane. Its subcellular location is the cytoplasmic vesicle. It localises to the endoplasmic reticulum membrane. Molecular chaperone which mediates the proper assembly and functional expression of the nicotinic acetylcholine receptors (nAChRs) throughout the brain. Essential for the proper folding, assembly, function and surface trafficking of alpha-7 (CHRNA7), alpha-4-beta-2, alpha-3-beta-2 and alpha-3-beta-4 receptors. Stably associates with ribophorin-1 (RPN1) and ribophorin-2 (RPN2) (components of the oligosaccharyl transferase (OST) complex) and with calnexin (CANX), both of which are critical for NACHO-mediated effects on CHRNA7 assembly and function. Facilitates the proper folding and assembly of alpha-6-beta-2 and alpha-6-beta-2-beta-3 receptors and acts at early stages of the nAChRs subunit assembly. Promotes the expression of the alpha-4(2):beta-2(3) stoichiometric form over the alpha-4(3):beta-2(2) form. This is Novel acetylcholine receptor chaperone from Mus musculus (Mouse).